The primary structure comprises 413 residues: Serine hydroxymethyltransferase (413 aa).

(6S)-5,6,7,8-tetrahydrofolate-binding positions include L117 and 121-123 (GHL). K226 carries the post-translational modification N6-(pyridoxal phosphate)lysine. Residues E239 and 349 to 351 (SPF) contribute to the (6S)-5,6,7,8-tetrahydrofolate site.

Belongs to the SHMT family. As to quaternary structure, homodimer. Pyridoxal 5'-phosphate serves as cofactor.

It localises to the cytoplasm. It carries out the reaction (6R)-5,10-methylene-5,6,7,8-tetrahydrofolate + glycine + H2O = (6S)-5,6,7,8-tetrahydrofolate + L-serine. It participates in one-carbon metabolism; tetrahydrofolate interconversion. The protein operates within amino-acid biosynthesis; glycine biosynthesis; glycine from L-serine: step 1/1. Catalyzes the reversible interconversion of serine and glycine with tetrahydrofolate (THF) serving as the one-carbon carrier. This reaction serves as the major source of one-carbon groups required for the biosynthesis of purines, thymidylate, methionine, and other important biomolecules. Also exhibits THF-independent aldolase activity toward beta-hydroxyamino acids, producing glycine and aldehydes, via a retro-aldol mechanism. This chain is Serine hydroxymethyltransferase, found in Bacillus cereus (strain ATCC 10987 / NRS 248).